The sequence spans 641 residues: SUMO-activating enzyme subunit 2-B (641 aa).

ATP is bound by residues G24 to G29, D48, N56 to R59, K72, S95 to I96, and D117 to R122. Zn(2+) contacts are provided by C158 and C161. C173 (glycyl thioester intermediate) is an active-site residue. Residues C439 and C442 each contribute to the Zn(2+) site. The disordered stretch occupies residues G546–D641. Over residues V548–V561 the composition is skewed to basic and acidic residues. Polar residues predominate over residues K562–A579. 2 stretches are compositionally biased toward acidic residues: residues Q582–S594 and P630–D641.

Belongs to the ubiquitin-activating E1 family. In terms of assembly, heterodimer of sae1 and uba2/sae2. The heterodimer corresponds to the two domains that are encoded on a single polypeptide chain in ubiquitin-activating enzyme E1. Interacts with ube2i.

The protein localises to the nucleus. It participates in protein modification; protein sumoylation. The heterodimer acts as an E1 ligase for sumo1, sumo2, and sumo3. It mediates ATP-dependent activation of sumo proteins followed by formation of a thioester bond between a sumo protein and a conserved active site cysteine residue on uba2/sae2. The chain is SUMO-activating enzyme subunit 2-B (uba2-b) from Xenopus laevis (African clawed frog).